The chain runs to 436 residues: GTPase Der (436 aa).

EngA-type G domains lie at 4 to 167 (PTVA…PNEI) and 175 to 351 (IKFS…HAQN). GTP-binding positions include 10-17 (GRPNVGKS), 57-61 (DTGGI), 119-122 (NKVD), 181-188 (GRPNVGKS), 229-233 (DTAGM), and 294-297 (NKWD). The region spanning 352–436 (LRISSSVLND…PIHLIARKRK (85 aa)) is the KH-like domain.

It belongs to the TRAFAC class TrmE-Era-EngA-EngB-Septin-like GTPase superfamily. EngA (Der) GTPase family. As to quaternary structure, associates with the 50S ribosomal subunit.

Functionally, GTPase that plays an essential role in the late steps of ribosome biogenesis. The protein is GTPase Der of Lactococcus lactis subsp. cremoris (strain SK11).